A 133-amino-acid polypeptide reads, in one-letter code: Rodlin protein RdlB (133 aa).

Residues M1–A28 form the signal peptide. Amyloid-forming stretches follow at residues Q45 to S57 and Q59 to P70. Residues Q45–P70 form a required for amyloid formation region.

It belongs to the rodlin family.

It localises to the secreted. Its subcellular location is the cell wall. The protein resides in the spore wall. Its function is as follows. Forms part of the rodlet layer on the spore surface; despite their high similarity both RdlA and RdlB are required for rodlet formation. Plays a role in cell adhesion to polystyrene plates. Forms amyloid-like fibrils in vitro composed of stacked beta-sheets. This Streptomyces coelicolor (strain ATCC BAA-471 / A3(2) / M145) protein is Rodlin protein RdlB.